The primary structure comprises 159 residues: Carbohydrate sulfotransferase 15 (159 aa).

Topologically, residues 1–159 (SGTTDFYRRI…YQPHNERLVK (159 aa)) are lumenal. N-linked (GlcNAc...) asparagine glycans are attached at residues N42 and N112.

The protein belongs to the sulfotransferase 1 family. Requires a divalent metal cation as cofactor. The cofactor is glutathione.

Its subcellular location is the golgi apparatus membrane. The catalysed reaction is dermatan 4'-sulfate + n 3'-phosphoadenylyl sulfate = dermatan 4',6'-bissulfate + n adenosine 3',5'-bisphosphate + n H(+). It carries out the reaction chondroitin 4'-sulfate + n 3'-phosphoadenylyl sulfate = chondroitin 4',6'-bissulfate + n adenosine 3',5'-bisphosphate + n H(+). In terms of biological role, sulfotransferase that transfers sulfate from 3'-phosphoadenosine 5'-phosphosulfate (PAPS) to the C-6 hydroxyl group of the GalNAc 4-sulfate residue of chondroitin sulfate A and forms chondroitin sulfate E containing GlcA-GalNAc(4,6-SO(4)) repeating units. This is Carbohydrate sulfotransferase 15 (GALNAC4S6ST) from Nototodarus sloanii (Wellington flying squid).